The following is a 349-amino-acid chain: Beta-glucanase (349 aa).

The first 27 residues, 1 to 27 (MNIKKTAVKSALAVAAAAAALTTNVSA), serve as a signal peptide directing secretion. Residues 28 to 197 (KDFSGAELYT…WVKVYKYTPG (170 aa)) form the GH16 domain. The Nucleophile role is filled by Glu-79. Glu-83 (proton donor) is an active-site residue. Positions 258 to 311 (SFNGQVPRDDEPAPQSSSSAPASSSSVPASSSSVPASSSSAFVPPSSSSATNAI) are disordered. Positions 270–307 (APQSSSSAPASSSSVPASSSSVPASSSSAFVPPSSSSA) are enriched in low complexity. A run of 5 repeats spans residues 271-277 (PQSSSSA), 278-284 (PASSSSV), 285-291 (PASSSSV), 292-298 (PASSSSA), and 301-307 (PPSSSSA). A 5 X 7 AA tandem repeats of P-X-S-S-S-S-X region spans residues 271-307 (PQSSSSAPASSSSVPASSSSVPASSSSAFVPPSSSSA).

This sequence belongs to the glycosyl hydrolase 16 family.

The enzyme catalyses Hydrolysis of (1-&gt;4)-beta-D-glucosidic linkages in beta-D-glucans containing (1-&gt;3)- and (1-&gt;4)-bonds.. In Fibrobacter succinogenes (strain ATCC 19169 / S85), this protein is Beta-glucanase.